Reading from the N-terminus, the 423-residue chain is Serine--tRNA ligase (423 aa).

231-233 (TAE) contacts L-serine. Residue 262-264 (RSE) coordinates ATP. Residue glutamate 285 coordinates L-serine. 349-352 (EISS) contributes to the ATP binding site. Serine 384 contributes to the L-serine binding site.

Belongs to the class-II aminoacyl-tRNA synthetase family. Type-1 seryl-tRNA synthetase subfamily. As to quaternary structure, homodimer. The tRNA molecule binds across the dimer.

It is found in the cytoplasm. The catalysed reaction is tRNA(Ser) + L-serine + ATP = L-seryl-tRNA(Ser) + AMP + diphosphate + H(+). The enzyme catalyses tRNA(Sec) + L-serine + ATP = L-seryl-tRNA(Sec) + AMP + diphosphate + H(+). It functions in the pathway aminoacyl-tRNA biosynthesis; selenocysteinyl-tRNA(Sec) biosynthesis; L-seryl-tRNA(Sec) from L-serine and tRNA(Sec): step 1/1. Functionally, catalyzes the attachment of serine to tRNA(Ser). Is also able to aminoacylate tRNA(Sec) with serine, to form the misacylated tRNA L-seryl-tRNA(Sec), which will be further converted into selenocysteinyl-tRNA(Sec). The protein is Serine--tRNA ligase of Lactococcus lactis subsp. lactis (strain IL1403) (Streptococcus lactis).